We begin with the raw amino-acid sequence, 77 residues long: uncharacterized protein (77 aa).

The span at 1 to 10 (MFNNKGRRNV) shows a compositional bias: basic residues. The segment at 1-21 (MFNNKGRRNVRNNEVRRNVPV) is disordered. The span at 11–21 (RNNEVRRNVPV) shows a compositional bias: basic and acidic residues. The TRAM domain occupies 20–77 (PVKEGETYTVTIEDMGRGGDGIARVEGFVVFVPETQKGETVNVKITAVKSKFAFAEKI).

This is an uncharacterized protein from Methanocaldococcus jannaschii (strain ATCC 43067 / DSM 2661 / JAL-1 / JCM 10045 / NBRC 100440) (Methanococcus jannaschii).